A 296-amino-acid polypeptide reads, in one-letter code: N-acetylmuramic acid 6-phosphate etherase (296 aa).

Residues 54–217 (VTESFRKGGR…STTSMVGIGK (164 aa)) enclose the SIS domain. E82 (proton donor) is an active-site residue. E113 is an active-site residue.

Belongs to the GCKR-like family. MurNAc-6-P etherase subfamily. Homodimer.

It carries out the reaction N-acetyl-D-muramate 6-phosphate + H2O = N-acetyl-D-glucosamine 6-phosphate + (R)-lactate. The protein operates within amino-sugar metabolism; N-acetylmuramate degradation. In terms of biological role, specifically catalyzes the cleavage of the D-lactyl ether substituent of MurNAc 6-phosphate, producing GlcNAc 6-phosphate and D-lactate. In Listeria welshimeri serovar 6b (strain ATCC 35897 / DSM 20650 / CCUG 15529 / CIP 8149 / NCTC 11857 / SLCC 5334 / V8), this protein is N-acetylmuramic acid 6-phosphate etherase.